Reading from the N-terminus, the 634-residue chain is Chaperone protein HtpG (634 aa).

The interval methionine 1–arginine 342 is a; substrate-binding. The b stretch occupies residues glutamate 343–glutamine 559. The interval leucine 560–valine 634 is c.

It belongs to the heat shock protein 90 family. As to quaternary structure, homodimer.

It is found in the cytoplasm. Molecular chaperone. Has ATPase activity. The protein is Chaperone protein HtpG of Xanthomonas euvesicatoria pv. vesicatoria (strain 85-10) (Xanthomonas campestris pv. vesicatoria).